The following is a 536-amino-acid chain: MSDYENDDECWSVLEGFRVTLTSVIDPSRITPYLRQCKVLNPDDEEQVLSDPNLVIRKRKVGVLLDILQRTGHKGYVAFLESLELYYPQLYKKVTGKEPARVFSMIIDASGESGLTQLLMTEVMKLQKKVQDLTALLSSKDDFIKELRVKDSLLRKHQERVQRLKEECEAGSRELKRCKEENYDLAMRLAHQSEEKGAALMRNRDLQLEIDQLKHSLMKAEDDCKVERKHTLKLRHAMEQRPSQELLWELQQEKALLQARVQELEASVQEGKLDRSSPYIQVLEEDWRQALRDHQEQANTIFSLRKDLRQGEARRLRCMEEKEMFELQCLALRKDSKMYKDRIEAILLQMEEVAIERDQAIATREELHAQHARGLQEKDALRKQVRELGEKADELQLQVFQCEAQLLAVEGRLRRQQLETLVLSSDLEDGSPRRSQELSLPQDLEDTQLSDKGCLAGGGSPKQPFAALHQEQVLRNPHDAGLSSGEPPEKERRRLKESFENYRRKRALRKMQKGWRQGEEDRENTTGSDNTDTEGS.

Ser2 carries the post-translational modification Phosphoserine. Asp3, Cys10, and His73 together coordinate Zn(2+). A CARD domain is found at 6–98 (NDDECWSVLE…QLYKKVTGKE (93 aa)). The linker stretch occupies residues 99–116 (PARVFSMIIDASGESGLT). Coiled coils occupy residues 117–277 (QLLM…DRSS) and 332–419 (LRKD…QQLE). Lys125 participates in a covalent cross-link: Glycyl lysine isopeptide (Lys-Gly) (interchain with G-Cter in ubiquitin). Thr231 carries the phosphothreonine modification. A Phosphoserine modification is found at Ser277. Ser424, Ser425, Ser431, Ser450, Ser460, Ser483, and Ser498 each carry phosphoserine. The interval 427–536 (LEDGSPRRSQ…GSDNTDTEGS (110 aa)) is disordered. Residues 487 to 502 (PPEKERRRLKESFENY) show a composition bias toward basic and acidic residues. The segment covering 503 to 513 (RRKRALRKMQK) has biased composition (basic residues). Residues Thr531 and Thr533 each carry the phosphothreonine; by CK2 modification.

As to quaternary structure, monomer. Homodimer; homodimerization is mediated by the CARD domain which forms an extensive interaction with the adjacent linker and coiled-coil regions; leads to an autoinhibited state. Homomultimer; polymerizes following activation, forming a nucleating helical template that seeds BCL10-filament formation via a CARD-CARD interaction. Interacts (via CARD domain) with BCL10 (via CARD domain); interaction takes place following CARD9 activation and polymerization, leading to the formation of a filamentous CBM complex assembly. Component of a CBM complex (CARD9-BCL10, MALT1), composed of CARD9, BCL10 and MALT1. Interacts with RASGRF1. Interacts with NOD2 (via NACHT domain); interaction is direct. Interacts with RIPK2. Interacts with VHL; without leading to protein degradation. In terms of processing, phosphorylated at Thr-231 by PRKCD downstream of C-type lectin receptors activation: phosphorylation promotes interaction with BCL10, followed by activation of NF-kappa-B and MAP kinase p38 pathways. Phosphorylated at Thr-531 and Thr-533 by CK2 following interaction with VHL, leading to inhibit the ability to activate NF-kappa-B. Post-translationally, ubiquitinated at Lys-125 via 'Lys-27'-linked ubiquitin by TRIM62 downstream of C-type lectin receptors activation; leading to CARD9 activation, followed by activation of NF-kappa-B and MAP kinase p38 pathways. Deubiquitinated at Lys-125 by USP15, inhibiting CARD9. In terms of tissue distribution, expression is restricted to several populations of phagocytes, such as macrophages, monocytes, and dendritic cells. Highly expressed in spleen. Also detected in liver, placenta, lung, peripheral blood leukocytes and in brain.

The protein resides in the cytoplasm. With respect to regulation, maintained in an autoinhibited state via homodimerization in which the CARD domain forms an extensive interaction with the adjacent linker and coiled-coil regions. Activation downstream of C-type lectin receptors, by phosphorylation by PRKCD and/or ubiquitination by TRIM62, triggers disruption of the CARD domain-coiled coil interface, CARD9 homooligomerization and BCL10 recruitment, followed by activation of NF-kappa-B and MAP kinase p38 pathways. Zinc-binding inhibits activation by stabilizing the CARD ground-state conformation and restricting its capacity to form BCL10-nucleating filaments. Functionally, adapter protein that plays a key role in innate immune response against fungi by forming signaling complexes downstream of C-type lectin receptors. CARD9-mediated signals are essential for antifungal immunity against a subset of fungi from the phylum Ascomycota. Transduces signals in myeloid cells downstream of C-type lectin receptors CLEC7A (dectin-1), CLEC6A (dectin-2) and CLEC4E (Mincle), which detect pathogen-associated molecular pattern metabolites (PAMPs), such as fungal carbohydrates, and trigger CARD9 activation. Upon activation, CARD9 homooligomerizes to form a nucleating helical template that recruits BCL10 via CARD-CARD interaction, thereby promoting polymerization of BCL10 and subsequent recruitment of MALT1: this leads to activation of NF-kappa-B and MAP kinase p38 (MAPK11, MAPK12, MAPK13 and/or MAPK14) pathways which stimulate expression of genes encoding pro-inflammatory cytokines and chemokines. CARD9 signaling in antigen-presenting cells links innate sensing of fungi to the activation of adaptive immunity and provides a cytokine milieu that induces the development and subsequent of interleukin 17-producing T helper (Th17) cells. Also involved in activation of myeloid cells via classical ITAM-associated receptors and TLR: required for TLR-mediated activation of MAPK, while it is not required for TLR-induced activation of NF-kappa-B. CARD9 can also be engaged independently of BCL10: forms a complex with RASGRF1 downstream of C-type lectin receptors, which recruits and activates HRAS, leading to ERK activation and the production of cytokines. Acts as an important regulator of the intestinal commensal fungi (mycobiota) component of the gut microbiota. Plays an essential role in antifungal immunity against dissemination of gut fungi: acts by promoting induction of antifungal IgG antibodies response in CX3CR1(+) macrophages to confer protection against disseminated C.albicans or C.auris infection. Also mediates immunity against other pathogens, such as certain bacteria, viruses and parasites; CARD9 signaling is however redundant with other innate immune responses. In response to L.monocytogenes infection, required for the production of inflammatory cytokines activated by intracellular peptidoglycan: acts by connecting NOD2 recognition of peptidoglycan to downstream activation of MAP kinases (MAPK) without activating NF-kappa-B. This is Caspase recruitment domain-containing protein 9 from Homo sapiens (Human).